We begin with the raw amino-acid sequence, 304 residues long: Acetyl-coenzyme A carboxylase carboxyl transferase subunit beta (304 aa).

The CoA carboxyltransferase N-terminal domain occupies 23 to 292 (VWTKCDSCGQ…PNPEAPREGV (270 aa)). 4 residues coordinate Zn(2+): Cys-27, Cys-30, Cys-46, and Cys-49. The C4-type zinc finger occupies 27–49 (CDSCGQVLYRAELERNLEVCPKC). Residues 285–304 (PEAPREGVVVPPVPDQEPEA) form a disordered region. Residues 295–304 (PPVPDQEPEA) show a composition bias toward pro residues.

This sequence belongs to the AccD/PCCB family. Acetyl-CoA carboxylase is a heterohexamer composed of biotin carboxyl carrier protein (AccB), biotin carboxylase (AccC) and two subunits each of ACCase subunit alpha (AccA) and ACCase subunit beta (AccD). Zn(2+) is required as a cofactor.

The protein resides in the cytoplasm. The catalysed reaction is N(6)-carboxybiotinyl-L-lysyl-[protein] + acetyl-CoA = N(6)-biotinyl-L-lysyl-[protein] + malonyl-CoA. It participates in lipid metabolism; malonyl-CoA biosynthesis; malonyl-CoA from acetyl-CoA: step 1/1. In terms of biological role, component of the acetyl coenzyme A carboxylase (ACC) complex. Biotin carboxylase (BC) catalyzes the carboxylation of biotin on its carrier protein (BCCP) and then the CO(2) group is transferred by the transcarboxylase to acetyl-CoA to form malonyl-CoA. The chain is Acetyl-coenzyme A carboxylase carboxyl transferase subunit beta from Shigella sonnei (strain Ss046).